A 283-amino-acid chain; its full sequence is Probable voltage-dependent anion-selective channel (283 aa).

Belongs to the eukaryotic mitochondrial porin family.

It localises to the mitochondrion outer membrane. Forms a channel through the cell membrane that allows diffusion of small hydrophilic molecules. Plays a role in maintaining mitochondrial morphology. The protein is Probable voltage-dependent anion-selective channel of Caenorhabditis elegans.